The chain runs to 462 residues: MSFPQLGYPQYLTAGQGAVYGGERPGVLAAAAAAAAAAGRPTGAELGSCPTAAVTSVLGMYASPYSSPNYSAFLPYTTDLTLFSQMGSQYELKDNPGVHPATFAAHTTPGYYPYGQFQYGDPGRPKNATRESTSTLKAWLNEHRKNPYPTKGEKIMLAIITKMTLTQVSTWFANARRRLKKENKVTWGAMGKEDDNIFGSDNEGDHEKNEDDEEIDLESIDIDKIDDNDGEQSNEEEDEKLDHFRHGEKVSLKKESEVMIPSSDGLKPKDSLSLGKECSDTSNTRIVSPGGQGNIQAPPHSKPKIWSLAETATSPDGALKSSPPPSQANHTSPQMQHPAFLPSHGLYTCQIGKFHNWTNGAFLTQSSLINMRSLLGVNPHHAAHHNHHHLQAHQQSTLLATNLGSLSSDRTPERTSPKHSDRENLPRTESPPQLKPSFQAVREKTFSQQEGTSRILTALPSA.

Positions 121–183 (DPGRPKNATR…NARRRLKKEN (63 aa)) form a DNA-binding region, homeobox; TALE-type. 3 disordered regions span residues 191-302 (GKED…PHSK), 314-339 (SPDG…QHPA), and 405-462 (SLSS…LPSA). Acidic residues-rich tracts occupy residues 210-220 (EDDEEIDLESI) and 228-239 (NDGEQSNEEEDE). The span at 240–257 (KLDHFRHGEKVSLKKESE) shows a compositional bias: basic and acidic residues. Residues 410-426 (RTPERTSPKHSDRENLP) show a composition bias toward basic and acidic residues. The span at 446–455 (FSQQEGTSRI) shows a compositional bias: polar residues.

Belongs to the TALE/IRO homeobox family.

It localises to the nucleus. Its function is as follows. Acts partially redundantly with other irx members in neural patterning. Required for formation of the posterior forebrain, midbrain, hindbrain, and to a lesser extent, spinal cord. Acts early in neural plate development to induce expression of some but not all proneural genes, and specify a neural precursor state. Also up-regulates repressors that prevent neuronal differentiation. Patterns the neuroectoderm in both the anterior/posterior and dorsal/ventral axes. Acts primarily as a transcriptional repressor during neural development, and binds to the bmp4 promoter to repress gene expression and thus mediate down-regulation of bmp4 by wnt signaling. Controls multiple processes through bmp4-repression including neural plate development, neural crest specification and Spemann organizer development. Involved in the specification of the preplacodal field at the anterior border of the neural plate. Regulates the genetic cascade of interactions that are necessary for positioning the isthmus organizer and the formation of the midbrain-hindbrain boundary. Required during at least two stages of pronephros kidney development; during neurula stages, maintains transcription of key renal genes to define the size and identity of the pronephric anlage, probably in part through regulation of bmp-signaling. Subsequently required for proper formation of the intermediate tubule segment of the pronephros. Acts principally as a transcriptional activator during pronephros development. The polypeptide is Iroquois-class homeodomain protein irx-1-B (irx1-b) (Xenopus laevis (African clawed frog)).